We begin with the raw amino-acid sequence, 188 residues long: Elongation factor P (188 aa).

Lysine 34 is modified (N6-(3,6-diaminohexanoyl)-5-hydroxylysine).

This sequence belongs to the elongation factor P family. May be beta-lysylated on the epsilon-amino group of Lys-34 by the combined action of EpmA and EpmB, and then hydroxylated on the C5 position of the same residue by EpmC (if this protein is present). Lysylation is critical for the stimulatory effect of EF-P on peptide-bond formation. The lysylation moiety may extend toward the peptidyltransferase center and stabilize the terminal 3-CCA end of the tRNA. Hydroxylation of the C5 position on Lys-34 may allow additional potential stabilizing hydrogen-bond interactions with the P-tRNA.

It is found in the cytoplasm. It participates in protein biosynthesis; polypeptide chain elongation. In terms of biological role, involved in peptide bond synthesis. Alleviates ribosome stalling that occurs when 3 or more consecutive Pro residues or the sequence PPG is present in a protein, possibly by augmenting the peptidyl transferase activity of the ribosome. Modification of Lys-34 is required for alleviation. The protein is Elongation factor P of Pectobacterium carotovorum subsp. carotovorum (strain PC1).